The sequence spans 393 residues: S-adenosylmethionine synthase (393 aa).

Residue Glu9 coordinates Mg(2+). His15 serves as a coordination point for ATP. Residue Asp17 participates in Mg(2+) binding. Glu43 contacts K(+). L-methionine contacts are provided by Glu56 and Gln99. ATP is bound by residues 167 to 169 (DGK), 235 to 238 (SGRF), Asp246, 252 to 253 (RK), Ala269, Lys273, and Lys277. Asp246 is a binding site for L-methionine. Residue Lys277 participates in L-methionine binding.

The protein belongs to the AdoMet synthase family. In terms of assembly, homotetramer; dimer of dimers. Requires Mn(2+) as cofactor. Mg(2+) serves as cofactor. Co(2+) is required as a cofactor. It depends on K(+) as a cofactor.

The protein localises to the cytoplasm. The catalysed reaction is L-methionine + ATP + H2O = S-adenosyl-L-methionine + phosphate + diphosphate. The protein operates within amino-acid biosynthesis; S-adenosyl-L-methionine biosynthesis; S-adenosyl-L-methionine from L-methionine: step 1/1. With respect to regulation, increased activity in the presence of 25 percent acetonitrile, methanol or dimethylformamide. In terms of biological role, catalyzes the formation of S-adenosylmethionine from methionine and ATP. This Acacia koa (Koa tree) protein is S-adenosylmethionine synthase.